The sequence spans 187 residues: 5-formyltetrahydrofolate cyclo-ligase (187 aa).

ATP-binding positions include 6–10 (RQQIR), 139–146 (GMGGGFYD), and Asp-178.

It belongs to the 5-formyltetrahydrofolate cyclo-ligase family.

It carries out the reaction (6S)-5-formyl-5,6,7,8-tetrahydrofolate + ATP = (6R)-5,10-methenyltetrahydrofolate + ADP + phosphate. It participates in one-carbon metabolism; tetrahydrofolate interconversion. In terms of biological role, involved in the removal of 5-formyltetrahydrofolate. In vitro, it is a potent inhibitor of various folate-dependent enzymes in the C1 metabolism network and in vivo it might function as a folate storage. 5-formyltetrahydrofolate is also used as an antifolate rescue agent in cancer chemotherapy. Catalyzes the irreversible ATP-dependent transformation of 5-formyltetrahydrofolate (5-CHO-THF) to form 5,10-methenyltetrahydrofolate (5,10-CH=THF). The reverse reaction is catalyzed by the serine hydroxymethyltransferase GlyA (SHMT). The sequence is that of 5-formyltetrahydrofolate cyclo-ligase from Haemophilus influenzae (strain ATCC 51907 / DSM 11121 / KW20 / Rd).